A 216-amino-acid chain; its full sequence is Cyclic AMP receptor protein (216 aa).

6–126 is a binding site for a nucleoside 3',5'-cyclic phosphate; the sequence is LFHGLAPEEV…HNLAALLARR (121 aa). 3',5'-cyclic AMP is bound by residues 75–78 and 85–86; these read GEMS and RS. Residues 140 to 206 enclose the HTH crp-type domain; that stretch reads EEARNRVAYA…PGTVEVREAA (67 aa). Positions 166–185 form a DNA-binding region, H-T-H motif; sequence HHELAALAGTSRETVSRVLH.

As to quaternary structure, homodimer.

Functionally, activates transcription. Positively regulates six promoters upstream of the TTHB186, TTHB147, TTHB178, TTHB159, TTHA0771 and TTHA0176 genes in a cAMP-dependent manner. Regulated genes include clustered regularly interspaced short palindromic repeat (CRISPR) associated (Cas) genes, and the genes encoding a putative transcriptional regulator, a protein containing the exonuclease III-like domain of DNA polymerase, a GCN5-related acetyltransferase homolog, and some T.thermophilus-specific proteins of unknown function. The consensus DNA-binding site of this transcriptional regulator is 5'-(CT)NNG(G/T)(G/T)C(A/C)N(A/T)NNTCACAN(G/C)(G/C)-3' in which N is G, A, T or C. In Thermus thermophilus (strain ATCC 27634 / DSM 579 / HB8), this protein is Cyclic AMP receptor protein.